The chain runs to 245 residues: Hydrolase pyvD (245 aa).

Catalysis depends on residues C133, D179, and H211.

This sequence belongs to the dienelactone hydrolase family.

The protein operates within secondary metabolite biosynthesis. Its function is as follows. Hydrolase; part of the gene cluster that mediates the biosynthesis of pyranoviolin A, a pyranonigrin analog with a C-3 methoxy group. Initially, the PKS portion of pyvA synthesizes C-10 carbon chain from 5 molecules of malonyl-CoA, which is then condensed with the thiolation (T) domain-bound glycine activated by the adenylation (A) domain. The subsequent chain release by Dieckmann condensation (DKC) could be catalyzed by the TE domain present at the C-terminus of pyvA and/or the alpha/beta hydrolase pyvD, installing the tetramic acid moiety. The FAD-dependent monooxygenase pyvC next epoxidizes one of the olefins of the polyketide part, and the epoxide ring-opening induces the dihydro-gamma-pyrone ring formation. The cytochrome P450 monooxygeanse pyvB would be responsible for the 2 consecutive reactions, in which the dihydro-gamma-pyrone is oxidized to gamma-pyrone and C-7 is hydroxylated to yield pyranonigrin F. Finally, the O-methyltransferase pyvH methylates the C-3 hydroxy group to complete the biosynthesis. This Aspergillus violaceofuscus (strain CBS 115571) protein is Hydrolase pyvD.